We begin with the raw amino-acid sequence, 83 residues long: Putative defensin-like protein 67 (83 aa).

The first 24 residues, 1–24 (MGSSKLMVTCIVVAMLTISCDILS), serve as a signal peptide directing secretion. Cystine bridges form between Cys-38–Cys-82, Cys-42–Cys-65, Cys-51–Cys-80, and Cys-55–Cys-81.

This sequence belongs to the DEFL family.

The protein localises to the secreted. The sequence is that of Putative defensin-like protein 67 from Arabidopsis thaliana (Mouse-ear cress).